A 476-amino-acid chain; its full sequence is Protein EARLY HEADING DATE 2 (476 aa).

The segment covering 1 to 13 (MLLSDLSSDQEAT) has biased composition (polar residues). The disordered stretch occupies residues 1–27 (MLLSDLSSDQEATGSNSHGGGGGGDRM). 2 C2H2-type zinc fingers span residues 106-128 (FVCE…RRGH) and 156-186 (YVCP…SRKH). 2 consecutive short sequence motifs (nuclear localization signal) follow at residues 124–131 (HRRGHNLP) and 178–185 (IKKHFSRK). Residues 191-214 (WRCERCGKRYAVHSDWKAHVKNCG) form a C2H2-type 2; degenerate zinc finger. Residues C193, C196, H209, C213, C220, C222, H235, and C239 each contribute to the Zn(2+) site. The CCHC-type 2; atypical zinc-finger motif lies at 218–241 (YRCDCGILFSRKDSLLTHRAFCDA). The interval 228–240 (RKDSLLTHRAFCD) is SHR-binding.

Its subcellular location is the nucleus. Its function is as follows. Transcription activator that acts as a flowering master switch in both long and short days, independently of the circadian clock. Promotes flowering upstream of HD1 by up-regulating FTL1, FTL4, FTL5, FTL6, EHD1, HD3A and RFT1. Seems to repress FTL11 expression. May recognize the consensus motif 5'-TTTGTCGTAAT-3' in target gene promoters. The protein is Protein EARLY HEADING DATE 2 of Oryza sativa subsp. indica (Rice).